The primary structure comprises 237 residues: Uridylate kinase (237 aa).

12–15 (KLSG) provides a ligand contact to ATP. An involved in allosteric activation by GTP region spans residues 20 to 25 (GAEGFG). Gly-54 contributes to the UMP binding site. ATP contacts are provided by Gly-55 and Arg-59. UMP-binding positions include Asp-74 and 135–142 (TGSPFFTT). ATP contacts are provided by Thr-162, Tyr-168, and Asp-171.

This sequence belongs to the UMP kinase family. In terms of assembly, homohexamer.

The protein localises to the cytoplasm. The catalysed reaction is UMP + ATP = UDP + ADP. It functions in the pathway pyrimidine metabolism; CTP biosynthesis via de novo pathway; UDP from UMP (UMPK route): step 1/1. With respect to regulation, allosterically activated by GTP. Inhibited by UTP. Catalyzes the reversible phosphorylation of UMP to UDP. The polypeptide is Uridylate kinase (Actinobacillus succinogenes (strain ATCC 55618 / DSM 22257 / CCUG 43843 / 130Z)).